Reading from the N-terminus, the 255-residue chain is Ribonuclease HII (255 aa).

Positions Arg-58–Tyr-247 constitute an RNase H type-2 domain. Residues Asp-64, Glu-65, and Asp-156 each coordinate a divalent metal cation.

It belongs to the RNase HII family. It depends on Mn(2+) as a cofactor. Mg(2+) serves as cofactor.

It is found in the cytoplasm. It catalyses the reaction Endonucleolytic cleavage to 5'-phosphomonoester.. In terms of biological role, endonuclease that specifically degrades the RNA of RNA-DNA hybrids. This chain is Ribonuclease HII, found in Syntrophomonas wolfei subsp. wolfei (strain DSM 2245B / Goettingen).